The following is a 377-amino-acid chain: Glutamate 5-kinase (377 aa).

Lys22 is an ATP binding site. Residues Ser62, Asp149, and Asn161 each contribute to the substrate site. Residues 181–182 (TD) and 223–229 (TGGMVTK) each bind ATP. The region spanning 285-359 (QGTLVADSGA…GRNTAQLKRF (75 aa)) is the PUA domain.

The protein belongs to the glutamate 5-kinase family.

The protein resides in the cytoplasm. It catalyses the reaction L-glutamate + ATP = L-glutamyl 5-phosphate + ADP. It participates in amino-acid biosynthesis; L-proline biosynthesis; L-glutamate 5-semialdehyde from L-glutamate: step 1/2. Catalyzes the transfer of a phosphate group to glutamate to form L-glutamate 5-phosphate. This Bifidobacterium adolescentis (strain ATCC 15703 / DSM 20083 / NCTC 11814 / E194a) protein is Glutamate 5-kinase.